A 389-amino-acid polypeptide reads, in one-letter code: Pregnancy-associated glycoprotein 1 (389 aa).

An N-terminal signal peptide occupies residues 1 to 15 (MKWLVILGLVALSEC). The region spanning 76–386 (YVGNITIGTP…DRGQNRIGLR (311 aa)) is the Peptidase A1 domain. Asn-79 carries N-linked (GlcNAc...) asparagine glycosylation. Asp-94 is an active-site residue. A disulfide bridge connects residues Cys-107 and Cys-112. A glycan (N-linked (GlcNAc...) asparagine) is linked at Asn-130. An intrachain disulfide couples Cys-268 to Cys-272. Asp-277 is an active-site residue. Cys-311 and Cys-345 form a disulfide bridge. Asn-348 carries an N-linked (GlcNAc...) asparagine glycan.

The protein belongs to the peptidase A1 family. Expressed throughout the chorion, with the signal localized exclusively over the trophectoderm.

It localises to the secreted. Its subcellular location is the extracellular space. Its function is as follows. Appears to be proteolytically inactive. The chain is Pregnancy-associated glycoprotein 1 from Sus scrofa (Pig).